A 227-amino-acid polypeptide reads, in one-letter code: Lipoprotein-releasing system ATP-binding protein LolD (227 aa).

Residues 6–227 (LKCENINKFY…MQDGLLKEGA (222 aa)) form the ABC transporter domain. Position 42 to 49 (42 to 49 (GSSGSGKS)) interacts with ATP.

It belongs to the ABC transporter superfamily. Lipoprotein translocase (TC 3.A.1.125) family. In terms of assembly, the complex is composed of two ATP-binding proteins (LolD) and two transmembrane proteins (LolC and LolE).

It localises to the cell inner membrane. Part of the ABC transporter complex LolCDE involved in the translocation of mature outer membrane-directed lipoproteins, from the inner membrane to the periplasmic chaperone, LolA. Responsible for the formation of the LolA-lipoprotein complex in an ATP-dependent manner. This is Lipoprotein-releasing system ATP-binding protein LolD from Haemophilus influenzae (strain 86-028NP).